Here is a 411-residue protein sequence, read N- to C-terminus: Phosphoglycerate kinase (411 aa).

Substrate is bound by residues 22–24 (DFN), Arg37, 60–63 (HLSR), Arg123, and Arg165. Residues Lys216, Glu339, and 366–369 (GGDS) contribute to the ATP site.

This sequence belongs to the phosphoglycerate kinase family. Monomer.

It localises to the cytoplasm. It carries out the reaction (2R)-3-phosphoglycerate + ATP = (2R)-3-phospho-glyceroyl phosphate + ADP. The protein operates within carbohydrate degradation; glycolysis; pyruvate from D-glyceraldehyde 3-phosphate: step 2/5. This Mycoplasma genitalium (strain ATCC 33530 / DSM 19775 / NCTC 10195 / G37) (Mycoplasmoides genitalium) protein is Phosphoglycerate kinase (pgk).